The following is a 429-amino-acid chain: Nucleotide exchange factor Sil1 (429 aa).

The N-terminal stretch at 1 to 24 (MSGKQVVILLGSVLILGCLQVAAA) is a signal peptide. The N-linked (GlcNAc...) asparagine glycan is linked to asparagine 29. Residues 70 to 98 (DESERGTSLQSQPDDQNARESHDDNEPLA) are disordered. A compositionally biased stretch (polar residues) spans 75 to 84 (GTSLQSQPDD). The span at 85–94 (QNARESHDDN) shows a compositional bias: basic and acidic residues. A coiled-coil region spans residues 104 to 135 (DIIEESIRRVKEQKKSYAELRKAYKEFQKNFR). 3 N-linked (GlcNAc...) asparagine glycosylation sites follow: asparagine 150, asparagine 199, and asparagine 400. The Prevents secretion from ER motif lies at 426–429 (HTEL).

This sequence belongs to the SIL1 family.

The protein localises to the endoplasmic reticulum lumen. Functionally, required for protein translocation and folding in the endoplasmic reticulum (ER). Functions as a nucleotide exchange factor for an ER lumenal chaperone of HSP70 family. The polypeptide is Nucleotide exchange factor Sil1 (Drosophila melanogaster (Fruit fly)).